We begin with the raw amino-acid sequence, 894 residues long: Alpha-actinin-2 (894 aa).

The actin-binding stretch occupies residues 1 to 254; it reads MNQIEPGVQY…IMTYVSCFYH (254 aa). Calponin-homology (CH) domains are found at residues 38-142 and 151-257; these read KQQR…LRFA and TSAK…HAFA. Residue Thr237 is modified to Phosphothreonine. Spectrin repeat units lie at residues 281–391, 401–506, 516–627, and 637–740; these read RLME…WLLN, HLAE…ALER, QLHL…SLQE, and RLRR…EVET. 2 EF-hand domains span residues 753-788 and 789-824; these read EQMN…MGYD and LGEA…ETAD. Asp766, Asn770, Asp777, Asp802, Asn804, and Thr808 together coordinate Ca(2+).

Belongs to the alpha-actinin family. Homodimer; antiparallel. Also forms heterodimers with ACTN3. Interacts with ADAM12, MYOZ1, MYOZ2 and MYOZ3. Interacts via its C-terminal region with the LDB3 PDZ domain. Interacts with XIRP2. Interacts with DST isoform 1 (via N-terminus). Interacts with PARVB. Interacts with SYNPO2. In terms of processing, ubiquitinated by FBXL22, leading to proteasomal degradation. Expressed in both skeletal and cardiac muscle.

The protein resides in the cytoplasm. It is found in the myofibril. It localises to the sarcomere. Its subcellular location is the z line. Its function is as follows. F-actin cross-linking protein which is thought to anchor actin to a variety of intracellular structures. This is a bundling protein. The sequence is that of Alpha-actinin-2 (ACTN2) from Homo sapiens (Human).